Reading from the N-terminus, the 508-residue chain is MSDMDHTCFDTAKIDKLQELRERGVTVYPYTFDRRDTVEEIKERFSAIEHDKSEEEVSTAGRVYVVRQHGKTIFADIGDSEGRIQLYLRKNDLGEEQFDLFKQYVDAGDIVGVVGHVFRTKMGEITVWVDRFELLTKSVCPLPEKFHGLKNVETRYRQRYLDLIMNEESRETFRARSRIISLLRQFLFERDYLEFETPTLQPIYGGANARPFTTHHNALDQKLYLRIAPELYLKRLVVGGFDKVFEIAKNFRNEDIDTNHNPEFTMVEVYEAYRDYNDMMNLTEEILSHLAEKVLGTTVCSFAGHDLDFSRPWRRLTMEEAVREYAGIDFPAMSLEELHAFGLEHCVEGCESAATRGEYLVLFFEHFGEKHLIQPTFIYDFPIENSPLAKKHRSKEGLTERFELFIAGMEMANGFSELNDPLDQKARLEQQDAKRRKGDLEAQMIDYDFINALGYGMPPTGGVGIGIDRLVMLLTGKDSIKEVLLFPQMKTAVPGQNGDKAEEGDGEE.

Mg(2+)-binding residues include E403 and E410.

This sequence belongs to the class-II aminoacyl-tRNA synthetase family. In terms of assembly, homodimer. It depends on Mg(2+) as a cofactor.

It localises to the cytoplasm. The enzyme catalyses tRNA(Lys) + L-lysine + ATP = L-lysyl-tRNA(Lys) + AMP + diphosphate. The protein is Lysine--tRNA ligase of Methanoculleus marisnigri (strain ATCC 35101 / DSM 1498 / JR1).